Consider the following 302-residue polypeptide: O-antigen biosynthesis glycosyltransferase WbnK (302 aa).

The protein belongs to the glycosyltransferase 11 family.

It carries out the reaction beta-D-Gal-(1-&gt;3)-alpha-D-GalNAc-(1-&gt;3)-alpha-D-GalNAc-di-trans,octa-cis-undecaprenyl diphosphate + GDP-beta-L-fucose = alpha-L-Fuc-(1-&gt;2)-beta-D-Gal-(1-&gt;3)-alpha-D-GalNAc-(1-&gt;3)-alpha-D-GalNAc-di-trans,octa-cis-undecaprenyl diphosphate + GDP + H(+). Its pathway is bacterial outer membrane biogenesis; LPS O-antigen biosynthesis. Involved in the assembly of the O-repeating unit during O-antigen biosynthesis. The protein is O-antigen biosynthesis glycosyltransferase WbnK of Escherichia coli.